Reading from the N-terminus, the 211-residue chain is FMN-dependent NADH:quinone oxidoreductase (211 aa).

Residues 17 to 19 (SYS) and 102 to 105 (MWNF) contribute to the FMN site.

The protein belongs to the azoreductase type 1 family. As to quaternary structure, homodimer. The cofactor is FMN.

It catalyses the reaction 2 a quinone + NADH + H(+) = 2 a 1,4-benzosemiquinone + NAD(+). The catalysed reaction is N,N-dimethyl-1,4-phenylenediamine + anthranilate + 2 NAD(+) = 2-(4-dimethylaminophenyl)diazenylbenzoate + 2 NADH + 2 H(+). Functionally, quinone reductase that provides resistance to thiol-specific stress caused by electrophilic quinones. In terms of biological role, also exhibits azoreductase activity. Catalyzes the reductive cleavage of the azo bond in aromatic azo compounds to the corresponding amines. The sequence is that of FMN-dependent NADH:quinone oxidoreductase from Geobacillus kaustophilus (strain HTA426).